The primary structure comprises 396 residues: S-adenosylmethionine synthase (396 aa).

Residue histidine 16 coordinates ATP. Aspartate 18 serves as a coordination point for Mg(2+). Glutamate 44 serves as a coordination point for K(+). L-methionine contacts are provided by glutamate 57 and glutamine 100. The flexible loop stretch occupies residues 100 to 110 (QSPDIAQGVDR). Residues 167-169 (DAK), 232-233 (RF), aspartate 241, 247-248 (RK), alanine 264, and lysine 268 each bind ATP. An L-methionine-binding site is contributed by aspartate 241. Lysine 272 is an L-methionine binding site.

It belongs to the AdoMet synthase family. In terms of assembly, homotetramer; dimer of dimers. The cofactor is Mg(2+). K(+) is required as a cofactor.

The protein localises to the cytoplasm. It carries out the reaction L-methionine + ATP + H2O = S-adenosyl-L-methionine + phosphate + diphosphate. Its pathway is amino-acid biosynthesis; S-adenosyl-L-methionine biosynthesis; S-adenosyl-L-methionine from L-methionine: step 1/1. In terms of biological role, catalyzes the formation of S-adenosylmethionine (AdoMet) from methionine and ATP. The overall synthetic reaction is composed of two sequential steps, AdoMet formation and the subsequent tripolyphosphate hydrolysis which occurs prior to release of AdoMet from the enzyme. The chain is S-adenosylmethionine synthase from Ralstonia pickettii (strain 12J).